The following is a 178-amino-acid chain: Large ribosomal subunit protein uL6 (178 aa).

It belongs to the universal ribosomal protein uL6 family. Part of the 50S ribosomal subunit.

Functionally, this protein binds to the 23S rRNA, and is important in its secondary structure. It is located near the subunit interface in the base of the L7/L12 stalk, and near the tRNA binding site of the peptidyltransferase center. This is Large ribosomal subunit protein uL6 from Corynebacterium kroppenstedtii (strain DSM 44385 / JCM 11950 / CIP 105744 / CCUG 35717).